The following is a 236-amino-acid chain: tRNA (guanine-N(7)-)-methyltransferase (236 aa).

Positions 35, 60, 87, and 113 each coordinate S-adenosyl-L-methionine. D113 is an active-site residue. Residues K117 and D149 each contribute to the substrate site.

This sequence belongs to the class I-like SAM-binding methyltransferase superfamily. TrmB family.

The catalysed reaction is guanosine(46) in tRNA + S-adenosyl-L-methionine = N(7)-methylguanosine(46) in tRNA + S-adenosyl-L-homocysteine. It participates in tRNA modification; N(7)-methylguanine-tRNA biosynthesis. In terms of biological role, catalyzes the formation of N(7)-methylguanine at position 46 (m7G46) in tRNA. This chain is tRNA (guanine-N(7)-)-methyltransferase, found in Prochlorococcus marinus (strain MIT 9303).